Here is a 149-residue protein sequence, read N- to C-terminus: MQVILTQDVEKVGRRGDIVDVSRGYVRNYLVPRGLAEVATPAKLEEARRRMEEAAERERRLAERAEEIAETLNKSVITIEARTGEDERLFGSVTAANIAEAIEKARGIHLDRRKIRLEEPIRSLGTHQVPVQVHGEIEASVKVIVVPKL.

It belongs to the bacterial ribosomal protein bL9 family.

Binds to the 23S rRNA. The chain is Large ribosomal subunit protein bL9 from Rubrobacter xylanophilus (strain DSM 9941 / JCM 11954 / NBRC 16129 / PRD-1).